The sequence spans 473 residues: Dynein axonemal assembly factor 11 (473 aa).

4 LRR repeats span residues 22–43 (SLEELSLHQQEIERLEHIDKWC), 45–66 (DLKILYLQNNLIGKIENVSKLK), 67–88 (KLEYLNLALNNIERIENLEGCE), and 89–110 (WLTKLDLTVNFIGELSSVKTLT). Positions 123-161 (NPCADFDGYRQFVVVTLQQLKWLDGKEIERSERIQALQN) constitute an LRRCT domain. A coiled-coil region spans residues 153 to 205 (SERIQALQNYTSVEQQIREQEKAYCLRRAKEKEEAQRKLEEENESEDKKKSST). 2 stretches are compositionally biased toward basic and acidic residues: residues 188–202 (QRKLEEENESEDKKK) and 273–283 (EKQRKAQDKLS). Disordered regions lie at residues 188–244 (QRKL…TKES), 273–292 (EKQRKAQDKLSEKKKKAKPP), and 387–473 (VGEM…PPLI). One can recognise a CS domain in the interval 305–402 (VNEAKLDFSL…GGQRTPTSVK (98 aa)). The span at 397–408 (TPTSVKTTSTSS) shows a compositional bias: low complexity. The segment covering 417–431 (KQIERLEVDPSKHSC) has biased composition (basic and acidic residues). A compositionally biased stretch (acidic residues) spans 456–467 (PSEEDPDFEDNP).

Belongs to the tilB family. Interacts (via CS domain) with ZMYND10 (via C-terminus). In terms of tissue distribution, mainly expressed in cells with motile cilia. Expressed in epithelial cells of the trachea, testis and ependymal cells of the cerebral ventricles. In testis, abundant expression in late prophase of meiosis I with a dramatic decrease after the first meiotic division (at protein level).

The protein resides in the cytoplasm. It localises to the cell projection. Its subcellular location is the cilium. The protein localises to the dynein axonemal particle. It is found in the flagellum. Functionally, involved in dynein arm assembly, is important for expression and transporting outer dynein arm (ODA) proteins from the cytoplasm to the cilia. Acts as a crucial component in the formation and motility of spermatozoal flagella. In Mus musculus (Mouse), this protein is Dynein axonemal assembly factor 11 (Dnaaf11).